We begin with the raw amino-acid sequence, 1143 residues long: FH2 domain-containing protein 1 (1143 aa).

A disordered region spans residues Gly-16 to Ser-89. Composition is skewed to pro residues over residues Thr-29 to Pro-46 and Ser-56 to Pro-80. Residues Gly-87 to Gln-482 enclose the FH2 domain. At Ser-500 the chain carries Phosphoserine. The tract at residues Pro-517 to Arg-638 is disordered. Residues Pro-521–Pro-534 are compositionally biased toward low complexity. Ser-650, Ser-660, and Ser-664 each carry phosphoserine. A disordered region spans residues Leu-706–Lys-1143. Residues Gly-806–Ser-818 are compositionally biased toward low complexity. Basic and acidic residues predominate over residues Leu-848–Ala-861. Residues Arg-925 to Arg-947 are compositionally biased toward polar residues. Over residues Pro-958–Arg-968 the composition is skewed to low complexity. An MTBD; microtubule-binding domain region spans residues Gly-960–Leu-1086. Over residues Gln-995–Lys-1018 the composition is skewed to basic and acidic residues. Over residues Ala-1036–Ser-1046 the composition is skewed to polar residues. Basic and acidic residues-rich tracts occupy residues Val-1071 to Pro-1080 and Gly-1117 to Ser-1130.

Interacts with CEP170.

It localises to the cell projection. The protein resides in the cilium. It is found in the golgi apparatus. Its function is as follows. Microtubule-associated formin which regulates both actin and microtubule dynamics. Induces microtubule acetylation and stabilization and actin stress fiber formation. Regulates Golgi ribbon formation. Required for normal cilia assembly. Early in cilia assembly, may assist in the maturation and positioning of the centrosome/basal body, and once cilia assembly has initiated, may also promote cilia elongation by inhibiting disassembly. The sequence is that of FH2 domain-containing protein 1 (FHDC1) from Homo sapiens (Human).